A 213-amino-acid polypeptide reads, in one-letter code: Proteasome subunit beta (213 aa).

The propeptide at 1–11 is removed in mature form; by autocatalysis; the sequence is MPEQYQESMTG. Catalysis depends on threonine 12, which acts as the Nucleophile.

Belongs to the peptidase T1B family. In terms of assembly, the 20S proteasome core is composed of 14 alpha and 14 beta subunits that assemble into four stacked heptameric rings, resulting in a barrel-shaped structure. The two inner rings, each composed of seven catalytic beta subunits, are sandwiched by two outer rings, each composed of seven alpha subunits. The catalytic chamber with the active sites is on the inside of the barrel. Has a gated structure, the ends of the cylinder being occluded by the N-termini of the alpha-subunits. Is capped at one or both ends by the proteasome regulatory ATPase, PAN.

The protein localises to the cytoplasm. The catalysed reaction is Cleavage of peptide bonds with very broad specificity.. With respect to regulation, the formation of the proteasomal ATPase PAN-20S proteasome complex, via the docking of the C-termini of PAN into the intersubunit pockets in the alpha-rings, triggers opening of the gate for substrate entry. Interconversion between the open-gate and close-gate conformations leads to a dynamic regulation of the 20S proteasome proteolysis activity. In terms of biological role, component of the proteasome core, a large protease complex with broad specificity involved in protein degradation. The chain is Proteasome subunit beta from Methanoregula boonei (strain DSM 21154 / JCM 14090 / 6A8).